Reading from the N-terminus, the 133-residue chain is Ribosomal silencing factor RsfS (133 aa).

It belongs to the Iojap/RsfS family. Interacts with ribosomal protein uL14 (rplN).

The protein localises to the cytoplasm. In terms of biological role, functions as a ribosomal silencing factor. Interacts with ribosomal protein uL14 (rplN), blocking formation of intersubunit bridge B8. Prevents association of the 30S and 50S ribosomal subunits and the formation of functional ribosomes, thus repressing translation. In Zymomonas mobilis subsp. mobilis (strain ATCC 31821 / ZM4 / CP4), this protein is Ribosomal silencing factor RsfS.